The primary structure comprises 280 residues: Dimethylglycine N-methyltransferase (280 aa).

The protein belongs to the methyltransferase superfamily. As to quaternary structure, monomer.

It catalyses the reaction N,N-dimethylglycine + S-adenosyl-L-methionine = glycine betaine + S-adenosyl-L-homocysteine + H(+). It participates in amine and polyamine biosynthesis; betaine biosynthesis via glycine pathway; betaine from glycine: step 3/3. Its function is as follows. Catalyzes the methylation of dimethylglycine to betaine with S-adenosylmethionine (AdoMet) acting as the methyl donor. It has strict specificity for dimethylglycine as the methyl group acceptors. The chain is Dimethylglycine N-methyltransferase from Parasynechococcus marenigrum (strain WH8102).